The sequence spans 807 residues: Glycerol-3-phosphate acyltransferase (807 aa).

The short motif at 308–313 (CHRSHM) is the HXXXXD motif element.

The protein belongs to the GPAT/DAPAT family.

It is found in the cell inner membrane. The catalysed reaction is sn-glycerol 3-phosphate + an acyl-CoA = a 1-acyl-sn-glycero-3-phosphate + CoA. Its pathway is phospholipid metabolism; CDP-diacylglycerol biosynthesis; CDP-diacylglycerol from sn-glycerol 3-phosphate: step 1/3. The protein is Glycerol-3-phosphate acyltransferase of Shewanella woodyi (strain ATCC 51908 / MS32).